The chain runs to 666 residues: MSQNLDQQVTLTVTLPDGTTKPLPAGSTGMDIALEIGRRLAREAVAIKIDGKAVDLSAPLTADCTAEIITFDSPEGKEIFWHSASHIMAHAIEELFPGSKFGAGPAIEQGFYYDIASEHRFTEEDLRAIEERMLLIAGRDIPIVREEMPRIQAIEYFRTVREDPYKVEILTDTLKETETVSLYHEGGFTDLCSGPHLFSTAALKAVKLFNISASYWRGDQSRESMQRIYGIAFPTEKLLKAHLSALEEAKKRDHRKLGTELELFMLSPEIGSGLPVWLPKGAIIRQELESFLKEEQRRRGYLPVYTPHIGNIDLYKRSGHYPYYSDSQFPPLTYHDEEGKAEQYLLKPMNCPHHHLIYSSKMRSYRDLPVRLAEFGTVYRHEQSGELNGLVRARGFTQDDSHIYCRPDQLVDEICNAIDLTRYVFATLGFTEVETRLSMHDPLNPSKYGGTADVWEQAEKDVREAADRMKINYFIGVGEASFYGPKIDFIVRDALGRKWQLGTVQVDYVMPERFDLSYVGSDGQKHRPIVIHRAPFGSMERFIGVLIEHTAGNFPLWLAPVQAVVLPIAEDVHDYGSEVRDAMHRAGIRVELDVRNEKIGRKIREAELAKIPFMVIVGQKEKEGGSVSLRRHRIGDEGAFSIQEMTEKLLNEIAAKGLTTKPTTNA.

The region spanning 7–70 (QQVTLTVTLP…TADCTAEIIT (64 aa)) is the TGS domain. The tract at residues 253-555 (DHRKLGTELE…LIEHTAGNFP (303 aa)) is catalytic. Residues Cys-351, His-402, and His-532 each contribute to the Zn(2+) site.

The protein belongs to the class-II aminoacyl-tRNA synthetase family. In terms of assembly, homodimer. Zn(2+) is required as a cofactor.

It is found in the cytoplasm. It catalyses the reaction tRNA(Thr) + L-threonine + ATP = L-threonyl-tRNA(Thr) + AMP + diphosphate + H(+). In terms of biological role, catalyzes the attachment of threonine to tRNA(Thr) in a two-step reaction: L-threonine is first activated by ATP to form Thr-AMP and then transferred to the acceptor end of tRNA(Thr). Also edits incorrectly charged L-seryl-tRNA(Thr). This is Threonine--tRNA ligase from Chlorobium phaeovibrioides (strain DSM 265 / 1930) (Prosthecochloris vibrioformis (strain DSM 265)).